The primary structure comprises 678 residues: ATP-dependent RNA helicase DHX58 (678 aa).

Residues 11 to 188 enclose the Helicase ATP-binding domain; that stretch reads ILPALEGKNI…QGAIDHILQL (178 aa). 24–31 lines the ATP pocket; that stretch reads LPTGAGKT. The DECH box signature appears at 131–134; that stretch reads DECH. Residues 353 to 514 enclose the Helicase C-terminal domain; that stretch reads MLERILLKQF…KAVAAVQKMD (162 aa). A coiled-coil region spans residues 489-546; it reads EMKRELTNEALEVLMEKAVAAVQKMDPDEFKAKIRDLQQASLVKRAARAAHREIQQGQ. Residues 542-669 enclose the RLR CTR domain; it reads IQQGQFLPEH…PVFDILQDCT (128 aa). Zn(2+) contacts are provided by C556, C559, C612, and C615. An RNA-binding region spans residues 572-655; it reads VEGTHHVNVN…KIQAKKWSRV (84 aa).

The protein belongs to the helicase family. RLR subfamily. Monomer in the absence of dsRNA. Homodimer in the presence of dsRNA. Interacts with RIGI (via CARD domain), MAVS/IPS1 and DDX60. Found in a complex with RIGI and IFIH1/MDA5. Interacts with ANKRD17. Directly interacts with ATG5 and ATG12, either as ATG5 and ATG12 monomers or as ATG12-ATG5 conjugates. In terms of tissue distribution, highly expressed in mammary tissues. Expressed in liver and testis. Expressed at lower level in spleen, embryo, mammary gland and breast tumors.

The protein localises to the cytoplasm. The enzyme catalyses ATP + H2O = ADP + phosphate + H(+). Acts as a regulator of RIGI and IFIH1/MDA5 mediated antiviral signaling. Cannot initiate antiviral signaling as it lacks the CARD domain required for activating MAVS/IPS1-dependent signaling events. Can have both negative and positive regulatory functions related to RIGI and IFIH1/MDA5 signaling and this role in regulating signaling may be complex and could probably depend on characteristics of the infecting virus or target cells, or both. Its inhibitory action on RIG-I signaling may involve the following mechanisms: competition with RIGI for binding to the viral RNA, binding to RIGI and inhibiting its dimerization and interaction with MAVS/IPS1, competing with IKBKE in its binding to MAVS/IPS1 thereby inhibiting activation of interferon regulatory factor 3 (IRF3). Its positive regulatory role may involve unwinding or stripping nucleoproteins of viral RNA thereby facilitating their recognition by RIGI and IFIH1/MDA5. Involved in the innate immune response to various RNA viruses and some DNA viruses such as poxviruses, and also to the bacterial pathogen Listeria monocytogenes. Can bind both ssRNA and dsRNA, with a higher affinity for dsRNA. Shows a preference to 5'-triphosphorylated RNA, although it can recognize RNA lacking a 5'-triphosphate. The chain is ATP-dependent RNA helicase DHX58 from Mus musculus (Mouse).